Consider the following 416-residue polypeptide: Adenylosuccinate synthetase (416 aa).

Residues Gly-13–Lys-19 and Gly-41–Thr-43 contribute to the GTP site. Residue Asp-14 is the Proton acceptor of the active site. Positions 14 and 41 each coordinate Mg(2+). IMP-binding positions include Asp-14 to Lys-17, Asn-39 to His-42, Thr-126, Arg-140, Gln-220, Thr-235, and Arg-299. His-42 functions as the Proton donor in the catalytic mechanism. Residue Val-295–Arg-301 participates in substrate binding. Residues Arg-301, Lys-327–Asp-329, and Ser-405–Ser-407 contribute to the GTP site.

This sequence belongs to the adenylosuccinate synthetase family. In terms of assembly, homodimer. Mg(2+) serves as cofactor.

Its subcellular location is the cytoplasm. It carries out the reaction IMP + L-aspartate + GTP = N(6)-(1,2-dicarboxyethyl)-AMP + GDP + phosphate + 2 H(+). The protein operates within purine metabolism; AMP biosynthesis via de novo pathway; AMP from IMP: step 1/2. In terms of biological role, plays an important role in the de novo pathway of purine nucleotide biosynthesis. Catalyzes the first committed step in the biosynthesis of AMP from IMP. The chain is Adenylosuccinate synthetase from Campylobacter lari (strain RM2100 / D67 / ATCC BAA-1060).